A 633-amino-acid polypeptide reads, in one-letter code: 1-deoxy-D-xylulose-5-phosphate synthase (633 aa).

Residues His-72 and 113-115 (GHS) each bind thiamine diphosphate. Mg(2+) is bound at residue Asp-144. Thiamine diphosphate is bound by residues 145 to 146 (GA), Asn-173, Tyr-284, and Glu-367. Asn-173 serves as a coordination point for Mg(2+).

This sequence belongs to the transketolase family. DXPS subfamily. In terms of assembly, homodimer. The cofactor is Mg(2+). Thiamine diphosphate is required as a cofactor.

The enzyme catalyses D-glyceraldehyde 3-phosphate + pyruvate + H(+) = 1-deoxy-D-xylulose 5-phosphate + CO2. It functions in the pathway metabolic intermediate biosynthesis; 1-deoxy-D-xylulose 5-phosphate biosynthesis; 1-deoxy-D-xylulose 5-phosphate from D-glyceraldehyde 3-phosphate and pyruvate: step 1/1. Functionally, catalyzes the acyloin condensation reaction between C atoms 2 and 3 of pyruvate and glyceraldehyde 3-phosphate to yield 1-deoxy-D-xylulose-5-phosphate (DXP). The polypeptide is 1-deoxy-D-xylulose-5-phosphate synthase (Bacillus velezensis (strain DSM 23117 / BGSC 10A6 / LMG 26770 / FZB42) (Bacillus amyloliquefaciens subsp. plantarum)).